The primary structure comprises 331 residues: Probable tRNA pseudouridine synthase B (331 aa).

Residues M1–P15 are compositionally biased toward basic and acidic residues. The disordered stretch occupies residues M1–R27. D71 serves as the catalytic Nucleophile. In terms of domain architecture, PUA spans L238–M313.

Belongs to the pseudouridine synthase TruB family. Type 2 subfamily.

The enzyme catalyses uridine(55) in tRNA = pseudouridine(55) in tRNA. In terms of biological role, could be responsible for synthesis of pseudouridine from uracil-55 in the psi GC loop of transfer RNAs. This is Probable tRNA pseudouridine synthase B from Pyrobaculum arsenaticum (strain DSM 13514 / JCM 11321 / PZ6).